Reading from the N-terminus, the 227-residue chain is Cytidylate kinase (227 aa).

G12–T20 is a binding site for ATP.

Belongs to the cytidylate kinase family. Type 1 subfamily.

It localises to the cytoplasm. It catalyses the reaction CMP + ATP = CDP + ADP. The catalysed reaction is dCMP + ATP = dCDP + ADP. This is Cytidylate kinase from Shigella boydii serotype 18 (strain CDC 3083-94 / BS512).